Reading from the N-terminus, the 621-residue chain is GPI-anchor transamidase component GPAA1 (621 aa).

Topologically, residues 2-19 (GLLSDPVRRRALARLVLR) are cytoplasmic. The helical transmembrane segment at 20–41 (LNAPLCVLSYVAGIAWFLALVF) threads the bilayer. The Lumenal portion of the chain corresponds to 42–370 (PPLTQRTYMS…LLPGLSRFVS (329 aa)). Tyr49 and Ser51 together coordinate a 2-acyl-6-[6-phosphoethanolamine-alpha-D-mannosyl-(1-&gt;2)-6-phosphoethanolamine-alpha-D-mannosyl-(1-&gt;6)-2-phosphoethanolamine-alpha-D-mannosyl-(1-&gt;4)-alpha-D-glucosaminyl]-1-(1-radyl,2-acyl-sn-glycero-3-phospho)-1D-myo-inositol. N-linked (GlcNAc...) asparagine glycosylation is present at Asn203. Cys259 and Cys266 are joined by a disulfide. Residues His354, Gln355, and Ser356 each coordinate a 2-acyl-6-[6-phosphoethanolamine-alpha-D-mannosyl-(1-&gt;2)-6-phosphoethanolamine-alpha-D-mannosyl-(1-&gt;6)-2-phosphoethanolamine-alpha-D-mannosyl-(1-&gt;4)-alpha-D-glucosaminyl]-1-(1-radyl,2-acyl-sn-glycero-3-phospho)-1D-myo-inositol. Gln355 is a Mg(2+) binding site. The chain crosses the membrane as a helical span at residues 371 to 393 (IGLYMPAVGFLLLVLGLKALELW). Residues 394–425 (MQLHEAGMGLEEPGGAPGPSVPLPPSQGVGLA) are Cytoplasmic-facing. A helical transmembrane segment spans residues 426 to 450 (SLVAPLLISQAMGLALYVLPVLGQH). Over 451–462 (VATQHFPVAEAE) the chain is Lumenal. The helical transmembrane segment at 463 to 483 (AVVLTLLAIYAAGLALPHNTH) threads the bilayer. Topologically, residues 484 to 495 (RVVSTQAPDRGW) are cytoplasmic. The next 2 helical transmembrane spans lie at 496–519 (MALKLVALIYLALQLGCIALTNFS) and 520–536 (LGFLLATTMVPTAALAK). The Cytoplasmic segment spans residues 537–540 (PHGP). A helical transmembrane segment spans residues 541–563 (RTLYAALLVLTSPAATLLGSLFL). Residues 564 to 597 (WRELQEAPLSLAEGWQLFLAALAQGVLEHHTYGA) are Lumenal-facing. A helical transmembrane segment spans residues 598-619 (LLFPLLSLGLYPCWLLFWNVLF). The Cytoplasmic segment spans residues 620–621 (WK).

In terms of assembly, heteropentamer. Part of the GPI-anchor transamidase complex, consisting of PIGK, PIGT, PIGS, PIGU and GAA1. Interacts with PIGK. As to expression, ubiquitously expressed in fetal and adult tissues. Expressed at higher levels in fetal tissues than adult tissues.

The protein localises to the endoplasmic reticulum membrane. It functions in the pathway glycolipid biosynthesis; glycosylphosphatidylinositol-anchor biosynthesis. In terms of biological role, component of the glycosylphosphatidylinositol-anchor (GPI-anchor) transamidase (GPI-T) complex that catalyzes the formation of the linkage between a proprotein and a GPI-anchor and participates in GPI anchored protein biosynthesis. Binds GPI-anchor. This chain is GPI-anchor transamidase component GPAA1, found in Homo sapiens (Human).